Consider the following 45-residue polypeptide: Large ribosomal subunit protein bL34c (45 aa).

A disordered region spans residues 1 to 21 (MIQRTLTGTNRKKTKRSGFRS). Residues 10–19 (NRKKTKRSGF) show a composition bias toward basic residues.

The protein belongs to the bacterial ribosomal protein bL34 family.

It localises to the plastid. It is found in the chloroplast. In Cyanidium caldarium (Red alga), this protein is Large ribosomal subunit protein bL34c (rpl34).